A 401-amino-acid polypeptide reads, in one-letter code: Histone acetyltransferase type B subunit 2 (401 aa).

WD repeat units lie at residues 116-147 (EHEEEITRARYMPQDPNIVATINGQGTVFLYS), 158-189 (FHKDNGYALSFSTLVKGRLLSGSDDHTVALWE), 206-237 (LHSDIINDNKWHNFNKDLFGTVSEDSLLKIND), 249-280 (KCPQPFNTLAFSHHSSNLLAAAGMDSYVYLYD), and 293-324 (GHEDAVNNLEFSTHVDGVVVSSGSDNRLMMWD). The tract at residues 335–339 (DDAED) is interaction with the histone H4 N-terminus. A WD 6 repeat occupies 350–381 (GHRSSVNDFDLNPQIPWLVASAEEENILQVWK).

This sequence belongs to the WD repeat RBAP46/RBAP48/MSI1 family. As to quaternary structure, component of the HAT-B complex composed of at least HAT1 and HAT2. In the cytoplasm, this complex binds to the histone H4 tail. In the nucleus, the HAT-B complex has an additional component, the histone H3/H4 chaperone HIF1.

The protein resides in the cytoplasm. It localises to the nucleus. In terms of biological role, regulatory subunit of the histone acetylase B (HAT-B) complex. The complex acetylates 'Lys-12' of histone H4 which is required for telomeric silencing. HAT2 is required for high affinity binding of the acetyltransferase to histone H4, for the nuclear location of HAT1 and for the HAT1-HIF1 interaction. Alone, it is unable to bind to H4, requiring HAT1 for high affinity interaction with the histone tail. HAT2 also has a HAT1 independent function in life-span regulation. This Saccharomyces cerevisiae (strain ATCC 204508 / S288c) (Baker's yeast) protein is Histone acetyltransferase type B subunit 2 (HAT2).